We begin with the raw amino-acid sequence, 475 residues long: tRNA modification GTPase MnmE (475 aa).

Residues arginine 24, glutamate 81, and lysine 124 each contribute to the (6S)-5-formyl-5,6,7,8-tetrahydrofolate site. Positions 220 to 397 constitute a TrmE-type G domain; the sequence is GLSVVLAGQP…LRRELLRLVG (178 aa). Asparagine 230 is a K(+) binding site. Residues 230–235, 249–255, 274–277, and 378–380 contribute to the GTP site; these read NVGKSS, TPIAGTT, DTAG, and SAR. Position 234 (serine 234) interacts with Mg(2+). Residues threonine 249, isoleucine 251, and threonine 254 each coordinate K(+). A Mg(2+)-binding site is contributed by threonine 255. A (6S)-5-formyl-5,6,7,8-tetrahydrofolate-binding site is contributed by lysine 475.

Belongs to the TRAFAC class TrmE-Era-EngA-EngB-Septin-like GTPase superfamily. TrmE GTPase family. As to quaternary structure, homodimer. Heterotetramer of two MnmE and two MnmG subunits. K(+) is required as a cofactor.

Its subcellular location is the cytoplasm. Its function is as follows. Exhibits a very high intrinsic GTPase hydrolysis rate. Involved in the addition of a carboxymethylaminomethyl (cmnm) group at the wobble position (U34) of certain tRNAs, forming tRNA-cmnm(5)s(2)U34. The sequence is that of tRNA modification GTPase MnmE from Cupriavidus necator (strain ATCC 17699 / DSM 428 / KCTC 22496 / NCIMB 10442 / H16 / Stanier 337) (Ralstonia eutropha).